The sequence spans 537 residues: Spore coat protein SP70 (537 aa).

The N-terminal stretch at 1–20 (MRILKLAALSCLLFIAPSLS) is a signal peptide. The 120-residue stretch at 21 to 140 (INCDGLSKDQ…CQIPATGGGP (120 aa)) folds into the DSCP-N domain. Asn-97 is a glycosylation site (N-linked (GlcNAc...) asparagine). Positions 157–179 (SCDKVNCPNGYICTIVNQLAVCV) constitute a Follistatin-like 1 domain. The tract at residues 183–246 (SSSSSSSSTT…GSHTTTGGST (64 aa)) is disordered. 4 consecutive Follistatin-like domains span residues 250-272 (TCGN…AVCV), 278-296 (SCAN…GECI), 358-380 (TCKT…PTCV), and 389-415 (TCKD…EECC).

In terms of processing, phosphorylated and fucosylated.

This is Spore coat protein SP70 (cotB) from Dictyostelium discoideum (Social amoeba).